Reading from the N-terminus, the 878-residue chain is Protein translocase subunit SecA (878 aa).

Residues Gln81, 99-103 (GEGKT), and Asp489 each bind ATP.

The protein belongs to the SecA family.

It localises to the plastid. It is found in the chloroplast stroma. The protein resides in the chloroplast thylakoid membrane. It catalyses the reaction ATP + H2O + cellular proteinSide 1 = ADP + phosphate + cellular proteinSide 2.. Its function is as follows. Has a central role in coupling the hydrolysis of ATP to the transfer of proteins across the thylakoid membrane. The polypeptide is Protein translocase subunit SecA (Thalassiosira pseudonana (Marine diatom)).